The sequence spans 284 residues: Aliphatic sulfonates import ATP-binding protein SsuB (284 aa).

Residues 21 to 242 (LRIAHAVKRY…HRGAPAFARL (222 aa)) form the ABC transporter domain. 53 to 60 (GRSGCGKS) provides a ligand contact to ATP.

The protein belongs to the ABC transporter superfamily. Aliphatic sulfonates importer (TC 3.A.1.17.2) family. The complex is composed of two ATP-binding proteins (SsuB), two transmembrane proteins (SsuC) and a solute-binding protein (SsuA).

Its subcellular location is the cell inner membrane. It catalyses the reaction ATP + H2O + aliphatic sulfonate-[sulfonate-binding protein]Side 1 = ADP + phosphate + aliphatic sulfonateSide 2 + [sulfonate-binding protein]Side 1.. In terms of biological role, part of the ABC transporter complex SsuABC involved in aliphatic sulfonates import. Responsible for energy coupling to the transport system. The protein is Aliphatic sulfonates import ATP-binding protein SsuB of Ralstonia nicotianae (strain ATCC BAA-1114 / GMI1000) (Ralstonia solanacearum).